A 246-amino-acid chain; its full sequence is Exosome complex component Rrp41 (246 aa).

The protein belongs to the RNase PH family. Rrp41 subfamily. As to quaternary structure, component of the archaeal exosome complex. Forms a hexameric ring-like arrangement composed of 3 Rrp41-Rrp42 heterodimers. The hexameric ring associates with a trimer of Rrp4 and/or Csl4 subunits.

The protein localises to the cytoplasm. Functionally, catalytic component of the exosome, which is a complex involved in RNA degradation. Has 3'-&gt;5' exoribonuclease activity. Can also synthesize heteromeric RNA-tails. This Pyrobaculum arsenaticum (strain DSM 13514 / JCM 11321 / PZ6) protein is Exosome complex component Rrp41.